Consider the following 625-residue polypeptide: Pentatricopeptide repeat-containing protein At2g36980, mitochondrial (625 aa).

Residues 1 to 7 (MSVLVRL) constitute a mitochondrion transit peptide. PPR repeat units lie at residues 3-33 (VLVR…MPEL), 34-68 (DTVA…DAKP), 69-103 (DDYS…GFCA), 104-134 (SLPV…MCCD), 137-167 (NEVT…MPKR), 168-202 (VAFA…EFKP), 203-238 (DCYT…GWSS), 239-269 (AVEA…IEVL), 270-300 (TQVS…APEK), 301-335 (NIVT…GVDS), 336-370 (DHFA…GFQG), 371-401 (YAYV…IANK), 402-436 (DLVS…GIKP), 437-471 (DNVT…YRIP), and 473-503 (EVDH…YSSL). The segment at 512 to 587 (SWETLLGACS…TPGCSWIEVG (76 aa)) is type E motif. Positions 588 to 618 (NQVSTFVVGDSSHPRLEELSETLNCLQHEMR) are type E(+) motif.

This sequence belongs to the PPR family. PCMP-E subfamily.

The protein resides in the mitochondrion. The chain is Pentatricopeptide repeat-containing protein At2g36980, mitochondrial (PCMP-E73) from Arabidopsis thaliana (Mouse-ear cress).